The primary structure comprises 354 residues: Methionine import ATP-binding protein MetN (354 aa).

Positions 8–250 (LDHIDITFHQ…PREDLTKDFI (243 aa)) constitute an ABC transporter domain. 42–49 (GYSGAGKS) is an ATP binding site.

This sequence belongs to the ABC transporter superfamily. Methionine importer (TC 3.A.1.24) family. As to quaternary structure, the complex is composed of two ATP-binding proteins (MetN), two transmembrane proteins (MetI) and a solute-binding protein (MetQ).

It localises to the cell membrane. It carries out the reaction L-methionine(out) + ATP + H2O = L-methionine(in) + ADP + phosphate + H(+). The catalysed reaction is D-methionine(out) + ATP + H2O = D-methionine(in) + ADP + phosphate + H(+). Part of the ABC transporter complex MetNIQ involved in methionine import. Responsible for energy coupling to the transport system. The chain is Methionine import ATP-binding protein MetN from Streptococcus mutans serotype c (strain ATCC 700610 / UA159).